We begin with the raw amino-acid sequence, 524 residues long: GMP synthase [glutamine-hydrolyzing] (524 aa).

In terms of domain architecture, Glutamine amidotransferase type-1 spans 9-207 (RILILDFGSQ…VIHICQCIPN (199 aa)). The active-site Nucleophile is the C86. Catalysis depends on residues H181 and E183. The region spanning 208–399 (WTTKHIIEDS…LGLPADLIYR (192 aa)) is the GMPS ATP-PPase domain. Residue 235 to 241 (SGGVDSA) coordinates ATP.

Homodimer.

It catalyses the reaction XMP + L-glutamine + ATP + H2O = GMP + L-glutamate + AMP + diphosphate + 2 H(+). It participates in purine metabolism; GMP biosynthesis; GMP from XMP (L-Gln route): step 1/1. Functionally, catalyzes the synthesis of GMP from XMP. This is GMP synthase [glutamine-hydrolyzing] from Coxiella burnetii (strain CbuK_Q154) (Coxiella burnetii (strain Q154)).